Here is a 290-residue protein sequence, read N- to C-terminus: Syntaxin (290 aa).

A disordered region spans residues 1-22 (MTKDRLAALKAAQSDDDDNDDV). Residues 1 to 267 (MTKDRLAALK…KYQSKARRKK (267 aa)) lie on the Cytoplasmic side of the membrane. A coiled-coil region spans residues 32–114 (MEEFFEQVDE…EEHTNKSSAD (83 aa)). The t-SNARE coiled-coil homology domain maps to 194 to 256 (LADIEARHND…ETAKMDTKKA (63 aa)). Residues 268–288 (IMILVCLAILIIILVGVIGGT) traverse the membrane as a helical; Anchor for type IV membrane protein segment. At 289–290 (LG) the chain is on the extracellular side.

Belongs to the syntaxin family.

It is found in the membrane. Its function is as follows. Potentially involved in docking of synaptic vesicles at presynaptic active zones. In Aplysia californica (California sea hare), this protein is Syntaxin.